A 416-amino-acid polypeptide reads, in one-letter code: Gamma-glutamyl phosphate reductase (416 aa).

Belongs to the gamma-glutamyl phosphate reductase family.

The protein localises to the cytoplasm. The catalysed reaction is L-glutamate 5-semialdehyde + phosphate + NADP(+) = L-glutamyl 5-phosphate + NADPH + H(+). Its pathway is amino-acid biosynthesis; L-proline biosynthesis; L-glutamate 5-semialdehyde from L-glutamate: step 2/2. In terms of biological role, catalyzes the NADPH-dependent reduction of L-glutamate 5-phosphate into L-glutamate 5-semialdehyde and phosphate. The product spontaneously undergoes cyclization to form 1-pyrroline-5-carboxylate. The chain is Gamma-glutamyl phosphate reductase from Streptococcus pyogenes serotype M1.